The chain runs to 236 residues: C-&gt;U-editing enzyme APOBEC-1 (236 aa).

Positions 10–134 (KDYTLRRRIE…RRNRQGLKDL (125 aa)) constitute a CMP/dCMP-type deaminase domain. His61 contacts Zn(2+). The Proton donor role is filled by Glu63. 2 residues coordinate Zn(2+): Cys93 and Cys96.

Belongs to the cytidine and deoxycytidylate deaminase family. As to quaternary structure, homodimer. Interacts with A1CF; form an mRNA editing complex. Interacts with RBM47; form an mRNA editing complex. Found in a complex with CELF2/CUGBP2 and A1CF. Interacts with HNRPAB. Interacts with SYNCRIP. The cofactor is Zn(2+). In terms of tissue distribution, expressed exclusively in the intestine.

Its subcellular location is the cytoplasm. It is found in the nucleus. It catalyses the reaction a cytidine in mRNA + H2O + H(+) = a uridine in mRNA + NH4(+). The enzyme catalyses cytidine(6666) in apoB mRNA + H2O + H(+) = uridine(6666) in apoB mRNA + NH4(+). In terms of biological role, cytidine deaminase catalyzing the cytidine to uridine postranscriptional editing of a variety of mRNAs. Form complexes with cofactors that confer differential editing activity and selectivity. Responsible for the postranscriptional editing of a CAA codon for Gln to a UAA codon for stop in the apolipoprotein B mRNA. Also involved in CGA (Arg) to UGA (Stop) editing in the NF1 mRNA. May also play a role in the epigenetic regulation of gene expression by participating in DNA demethylation. The sequence is that of C-&gt;U-editing enzyme APOBEC-1 from Oryctolagus cuniculus (Rabbit).